Reading from the N-terminus, the 143-residue chain is MCKKARKRGLLTIAFTILLFVIILVDIDRDRYLVRCGKDWLEFDNLCYFISENKLSWDDSMMVCDNLGGGNNININTNSGLLNTSKDYWIKIVDELDCTNINMCNFLYSNIVGCDICTIEKFYICIKPINKINLFSYFVEYTK.

The polypeptide is Putative protein FPV235 (Vertebrata (FPV)).